A 170-amino-acid polypeptide reads, in one-letter code: Lipoprotein signal peptidase (170 aa).

4 helical membrane-spanning segments follow: residues 11-31, 41-61, 69-89, and 95-115; these read LGWL…KLHF, IVVI…AAFS, WQRW…VVWL, and NETW…GNLY. Residues Asp-125 and Asp-144 contribute to the active site. The chain crosses the membrane as a helical span at residues 136-156; sequence YFPAFNFADSAITVGAVMLAL.

It belongs to the peptidase A8 family.

The protein localises to the cell inner membrane. It carries out the reaction Release of signal peptides from bacterial membrane prolipoproteins. Hydrolyzes -Xaa-Yaa-Zaa-|-(S,diacylglyceryl)Cys-, in which Xaa is hydrophobic (preferably Leu), and Yaa (Ala or Ser) and Zaa (Gly or Ala) have small, neutral side chains.. It participates in protein modification; lipoprotein biosynthesis (signal peptide cleavage). Functionally, this protein specifically catalyzes the removal of signal peptides from prolipoproteins. The chain is Lipoprotein signal peptidase from Pseudomonas fluorescens (strain ATCC BAA-477 / NRRL B-23932 / Pf-5).